The following is a 265-amino-acid chain: MLLAAVSLGLLLLAFLLLLRHLGWGLVAIGWFEFVQQPVHNLLMGGTKEQRILRHVQQHAKPGDPQSVLEAIDTYCSEKEWAMNVGDAKGQIMDAVIREYRPSLVLELGAYCGYSAVRMARLLPPGARLLTMEINPDYAAITQQMLDFAGLQDKVSILIGASQDLIPQLKKKYDVDTLDMVFLDHWKDRYLPDTLLLEECGLLRKGTVLLADNVIVPGTPDFLAYVRGSSSFECTHYSSYLEYMKVVDGLEKAVYQGPGSSPVKS.

At 1–2 (ML) the chain is on the cytoplasmic side. Residues 3-19 (LAAVSLGLLLLAFLLLL) form a helical; Signal-anchor for type II membrane protein membrane-spanning segment. At 20–265 (RHLGWGLVAI…QGPGSSPVKS (246 aa)) the chain is on the extracellular side. S-adenosyl-L-methionine is bound by residues Val85, Glu107, Ser115, Glu133, Ile134, 160-163 (GASQ), Ser162, and Asp184. A Mg(2+)-binding site is contributed by Asp184. Lys187 contacts substrate. Residues Asp212 and Asn213 each contribute to the Mg(2+) site. The substrate site is built by Asn213 and Glu242. Ser260, Ser261, and Ser265 each carry phosphoserine.

The protein belongs to the class I-like SAM-binding methyltransferase superfamily. Cation-dependent O-methyltransferase family. Mg(2+) serves as cofactor.

The protein resides in the cytoplasm. It localises to the cell membrane. The catalysed reaction is a catechol + S-adenosyl-L-methionine = a guaiacol + S-adenosyl-L-homocysteine + H(+). It carries out the reaction 2-hydroxyestrone + S-adenosyl-L-methionine = 2-hydroxy-3-methoxy-estrone + S-adenosyl-L-homocysteine + H(+). It catalyses the reaction 4-hydroxyestrone + S-adenosyl-L-methionine = 4-methoxyestrone + S-adenosyl-L-homocysteine + H(+). The enzyme catalyses 2-hydroxyestrone + S-adenosyl-L-methionine = 2-methoxyestrone + S-adenosyl-L-homocysteine + H(+). The catalysed reaction is 4-hydroxy-17beta-estradiol + S-adenosyl-L-methionine = 4-methoxy-17beta-estradiol + S-adenosyl-L-homocysteine + H(+). It carries out the reaction 2-hydroxy-17beta-estradiol + S-adenosyl-L-methionine = 2-hydroxy-3-methoxy-17beta-estradiol + S-adenosyl-L-homocysteine + H(+). It catalyses the reaction 2-hydroxy-17beta-estradiol + S-adenosyl-L-methionine = 2-methoxy-17beta-estradiol + S-adenosyl-L-homocysteine + H(+). Its function is as follows. Catalyzes the O-methylation, and thereby the inactivation, of catecholamine neurotransmitters and catechol hormones. Also shortens the biological half-lives of certain neuroactive drugs, like L-DOPA, alpha-methyl DOPA and isoproterenol. This is Catechol O-methyltransferase from Mus musculus (Mouse).